The chain runs to 374 residues: Tuliposide A-converting enzyme b2, amyloplastic (374 aa).

An amyloplast-targeting transit peptide spans 1–68 (MSVALFCGPP…TNSSLSPSPT (68 aa)). The active-site Acyl-ester intermediate is the serine 226. Catalysis depends on charge relay system residues aspartate 316 and histidine 348.

The protein belongs to the AB hydrolase superfamily. As to quaternary structure, homodimer. Highly expressed in pistil and bulb scales. Lower expression in stem, and barely detected in root, leaf, petal and stamen.

It localises to the plastid. It is found in the amyloplast. It carries out the reaction 6-tuliposide A = tulipalin A + D-glucose. In terms of biological role, lactone-forming carboxylesterases, specifically catalyzing intramolecular transesterification, but not hydrolysis. Involved in the biosynthesis of tulipalins, defensive chemicals that show antimicrobial activities against a broad range of strains of bacteria and fungi. Substrates are 6-tuliposide A &gt; 6-tuliposide B. The polypeptide is Tuliposide A-converting enzyme b2, amyloplastic (TCEA-B2) (Tulipa gesneriana (Garden tulip)).